A 350-amino-acid polypeptide reads, in one-letter code: MMAAGVSRFRGSLLGALLGDCIGAVFEGHTNVTKEFLFDYMKSLDKGERLKRVLTYTDDTAMARSIVQSVLENYEFNIEDLANRFTTEYNRDPDRGYGMAVVHVFEKLGSGEYKHVFSPAREQFDGKGSYGNGAAMRVVGISLAYPRIPDIIEYARTSGMLTHASSLGYNGAILQALAVHYALQGELAPETFLDQLLDHMKEVETDKKSRSDALELEMDEFPYCNKLRKIKAFLAREDVTRKDIVKELGNGIQAFESVPTAIYSFLRCLKPVSELPSELTNLQRTIAFCILLGGDTDTIATMAAAIAGAYHGEEQIPLNWKLSAEGYKDAEDWGEKLHQLYCRRLQSTTS.

Mg(2+) is bound by residues glutamate 27, threonine 57, aspartate 58, and aspartate 59. Aspartate 58 lines the substrate pocket. Residues 127 to 133 (KGSYGNG), histidine 163, leucine 216, and isoleucine 252 contribute to the substrate site. Residues aspartate 295, aspartate 297, and threonine 298 each coordinate Mg(2+).

It belongs to the ADP-ribosylglycohydrolase family. In terms of assembly, monomer. Requires Mg(2+) as cofactor.

The protein resides in the nucleus. Its subcellular location is the cytoplasm. It localises to the chromosome. The protein localises to the mitochondrion matrix. The catalysed reaction is [(1''-&gt;2')-ADP-alpha-D-ribose](n) + H2O = [(1''-&gt;2')-ADP-alpha-D-ribose](n-1) + ADP-D-ribose. It carries out the reaction 1''-O-acetyl-ADP-alpha-D-ribose + H2O = ADP-D-ribose + acetate + H(+). It catalyses the reaction O-(ADP-D-ribosyl)-L-seryl-[protein] + H2O = ADP-D-ribose + L-seryl-[protein]. The enzyme catalyses alpha-NAD(+) + H2O = ADP-D-ribose + nicotinamide + H(+). Its activity is regulated as follows. The protein undergoes a dramatic conformational switch from closed to open states upon substrate-binding, which enables specific substrate recognition for the 1''-O-linkage. The glutamate flap (Glu-27) blocks substrate entrance to Mg(2+) in the unliganded closed state. In presence of substrate, Glu-27 is ejected from the active site: this closed-to-open transition significantly widens the substrate-binding channel and precisely positions the scissile 1''-O-linkage for cleavage while securing tightly 2'- and 3'-hydroxyls of ADP-ribose. ADP-ribosylhydrolase that preferentially hydrolyzes the scissile alpha-O-linkage attached to the anomeric C1'' position of ADP-ribose and acts on different substrates, such as proteins ADP-ribosylated on serine and threonine, free poly(ADP-ribose) and O-acetyl-ADP-D-ribose. Specifically acts as a serine mono-ADP-ribosylhydrolase by mediating the removal of mono-ADP-ribose attached to serine residues on proteins, thereby playing a key role in DNA damage response. Serine ADP-ribosylation of proteins constitutes the primary form of ADP-ribosylation of proteins in response to DNA damage. Does not hydrolyze ADP-ribosyl-arginine, -cysteine, -diphthamide, or -asparagine bonds. Also able to degrade protein free poly(ADP-ribose), which is synthesized in response to DNA damage: free poly(ADP-ribose) acts as a potent cell death signal and its degradation by ADPRHL2 protects cells from poly(ADP-ribose)-dependent cell death, a process named parthanatos. Also hydrolyzes free poly(ADP-ribose) in mitochondria. Specifically digests O-acetyl-ADP-D-ribose, a product of deacetylation reactions catalyzed by sirtuins. Specifically degrades 1''-O-acetyl-ADP-D-ribose isomer, rather than 2''-O-acetyl-ADP-D-ribose or 3''-O-acetyl-ADP-D-ribose isomers. In Xenopus tropicalis (Western clawed frog), this protein is ADP-ribosylhydrolase ARH3 (adprs).